Reading from the N-terminus, the 87-residue chain is Small ribosomal subunit protein bS20 (87 aa).

This sequence belongs to the bacterial ribosomal protein bS20 family.

Its function is as follows. Binds directly to 16S ribosomal RNA. This chain is Small ribosomal subunit protein bS20, found in Beijerinckia indica subsp. indica (strain ATCC 9039 / DSM 1715 / NCIMB 8712).